The following is a 445-amino-acid chain: Phosphoglucosamine mutase (445 aa).

The active-site Phosphoserine intermediate is the serine 101. The Mg(2+) site is built by serine 101, aspartate 240, aspartate 242, and aspartate 244. Phosphoserine is present on serine 101.

This sequence belongs to the phosphohexose mutase family. Mg(2+) serves as cofactor. Activated by phosphorylation.

It carries out the reaction alpha-D-glucosamine 1-phosphate = D-glucosamine 6-phosphate. Its function is as follows. Catalyzes the conversion of glucosamine-6-phosphate to glucosamine-1-phosphate. The protein is Phosphoglucosamine mutase of Pseudomonas paraeruginosa (strain DSM 24068 / PA7) (Pseudomonas aeruginosa (strain PA7)).